Consider the following 295-residue polypeptide: Protein FAM221A (295 aa).

Over residues 272 to 283 (QERLLKEKEQKR) the composition is skewed to basic and acidic residues. Positions 272-295 (QERLLKEKEQKRQKNSKPPTTNRP) are disordered.

This sequence belongs to the FAM221 family.

This chain is Protein FAM221A (fam221a), found in Xenopus tropicalis (Western clawed frog).